The primary structure comprises 263 residues: 5'-nucleotidase SurE (263 aa).

A divalent metal cation is bound by residues aspartate 21, aspartate 22, serine 52, and asparagine 105.

The protein belongs to the SurE nucleotidase family. Requires a divalent metal cation as cofactor.

It is found in the cytoplasm. It carries out the reaction a ribonucleoside 5'-phosphate + H2O = a ribonucleoside + phosphate. Nucleotidase that shows phosphatase activity on nucleoside 5'-monophosphates. The sequence is that of 5'-nucleotidase SurE from Vibrio cholerae serotype O1 (strain ATCC 39541 / Classical Ogawa 395 / O395).